The sequence spans 292 residues: MPPKKAAKGKGDPGKAAKKDPTKKAADATFGLKNKNRSTKVQAKIRQIEQNAAASGSKDAKRQEALRKRREEEKRAAEAAKAEVAALFNAIPKKQTPQNFLTRKEEVKESQKIDLYSDVRDQQTDLPLEKRPWINTDIVCKFFLEACETGKYGWLWQCPNGNMTCIYKHALPYGYVLSRDKKKDDTKEEISLEAFIEIERHRLGPNLTPVTEENFKKWSDGRRDRILKQAEERRSNRAVGRSNLSGREYFESNKDKTHEVVGDEEDWDFSALRRETEALAKAQDATAPIVSV.

A disordered region spans residues 1-76 (MPPKKAAKGK…RKRREEEKRA (76 aa)). Composition is skewed to basic and acidic residues over residues 9–26 (GKGD…KKAA) and 58–76 (KDAK…EKRA). Residues 134–172 (INTDIVCKFFLEACETGKYGWLWQCPNGNMTCIYKHALP) form a C3H1-type zinc finger.

Its subcellular location is the cytoplasm. In terms of biological role, functions as a component of the nuclear pore complex (NPC). NPC components, collectively referred to as nucleoporins (NUPs), can play the role of both NPC structural components and of docking or interaction partners for transiently associated nuclear transport factors. Active directional transport is assured by both, a Phe-Gly (FG) repeat affinity gradient for these transport factors across the NPC and a transport cofactor concentration gradient across the nuclear envelope. Involved in the export of mRNA from the nucleus to the cytoplasm. May play a role in mitotic spindle formation and/or function. In Schizosaccharomyces pombe (strain 972 / ATCC 24843) (Fission yeast), this protein is mRNA export protein 33 (mep33).